Here is a 300-residue protein sequence, read N- to C-terminus: Regulatory protein NocR (300 aa).

One can recognise an HTH lysR-type domain in the interval Met-1–Thr-59. The segment at residues Met-19–Arg-38 is a DNA-binding region (H-T-H motif).

Belongs to the LysR transcriptional regulatory family.

In terms of biological role, positive regulatory protein for the noc operon involved in nopaline catabolism and uptake. The protein is Regulatory protein NocR (nocR) of Agrobacterium tumefaciens (strain T37).